We begin with the raw amino-acid sequence, 766 residues long: Leucine-rich repeat and fibronectin type III domain-containing protein 1 (766 aa).

The N-terminal stretch at 1 to 31 is a signal peptide; that stretch reads MAPGPFSSGLFSPPPAALPFLLLLWAGASRG. An LRRNT domain is found at 32–65; the sequence is QPCPGRCICQNVAPTLTMLCAKTGLLFVPPAIDR. At 32–536 the chain is on the extracellular side; the sequence is QPCPGRCICQ…LRAHFLGGTM (505 aa). 7 LRR repeats span residues 66–87, 90–111, 114–135, 138–159, 163–184, 187–208, and 211–232; these read RVVE…DFAN, SLVH…AFAD, ALRA…QLRG, NLRH…AFDA, TVED…AVGQ, NLNT…TFVQ, and KLVR…GLFL. N87 carries N-linked (GlcNAc...) asparagine glycosylation. Residues 252-298 enclose the LRRCT domain; the sequence is NPLHCNCELLWLRRLTREDDLETCATPEHLTDRYFWSIPEEEFLCEP. One can recognise an Ig-like domain in the interval 299 to 386; it reads PLITRQAGGR…GEATAPVEVC (88 aa). A disulfide bond links C321 and C370. N-linked (GlcNAc...) asparagine glycosylation occurs at N343. The disordered stretch occupies residues 397–424; that stretch reads PAAPPPLTEPGSSDIATPGRPGANDSTS. One can recognise a Fibronectin type-III domain in the interval 424 to 520; that stretch reads SERRLVAAEL…GCVQFTTAGD (97 aa). A helical membrane pass occupies residues 537 to 557; that stretch reads IIAIGGVIVASVLVFIVLLMI. Topologically, residues 558-766 are cytoplasmic; it reads RYKVYGDGDS…STEWMLESTV (209 aa). Disordered regions lie at residues 568 to 601 and 645 to 742; these read RRIK…PPAP and LCLL…GEDG. Phosphoserine is present on S713. Over residues 714–727 the composition is skewed to basic residues; sequence YPRRARRTKRHRST. Positions 763 to 766 match the PDZ-binding motif; it reads ESTV.

This sequence belongs to the LRFN family. In terms of assembly, can form heteromeric complexes with LRFN2, LRFN3, LRFN4 and LRFN5. Forms homomeric complexes, but not across cell junctions. Interacts with DLG4. Also interacts with DLG1, DLG2, and DLG3. Interacts with 2 AMPA receptor subunits GRIA1 and GRIA2 and NMDA receptor subunit GRIN1. In terms of processing, glycosylated. In terms of tissue distribution, predominantly expressed in the brain, with a weak, but broad expression in the cerebral cortex and diencephalic nuclei. Also detected in other parts of the central nervous system, including the olfactory bulb, pons, cerebellum, and medulla oblongata, as well as in the peripheral nervous system, such as the ganglia of cranial nerves and the dorsal root ganglion during gestation.

Its subcellular location is the membrane. It localises to the synapse. The protein localises to the postsynaptic density membrane. Promotes neurite outgrowth in hippocampal neurons. Involved in the regulation and maintenance of excitatory synapses. Induces the clustering of excitatory postsynaptic proteins, including DLG4, DLGAP1, GRIA1 and GRIN1. In Mus musculus (Mouse), this protein is Leucine-rich repeat and fibronectin type III domain-containing protein 1 (Lrfn1).